The chain runs to 205 residues: Peptidyl-prolyl cis-trans isomerase B (205 aa).

An N-terminal signal peptide occupies residues 1–20 (MKFSGLWCWLLLFLSVNVIA). Residues 39–198 (FFDIEHGEEK…EAVKIAKCGE (160 aa)) form the PPIase cyclophilin-type domain.

It belongs to the cyclophilin-type PPIase family. PPIase B subfamily.

The protein localises to the secreted. The catalysed reaction is [protein]-peptidylproline (omega=180) = [protein]-peptidylproline (omega=0). Its activity is regulated as follows. Cyclosporin A (CsA) inhibits CYPB. Its function is as follows. PPIases accelerate the folding of proteins. It catalyzes the cis-trans isomerization of proline imidic peptide bonds in oligopeptides. This is Peptidyl-prolyl cis-trans isomerase B (CPR2) from Saccharomyces cerevisiae (strain ATCC 204508 / S288c) (Baker's yeast).